Here is a 340-residue protein sequence, read N- to C-terminus: MREPGFWHRPPSLVSRLLLPIAAIYGNIAAARMQKAGTTVGVPVLCVGNYHMGGAGKTPTTLALVALLREFGETPVVLSRGYGGRLQGPVQVDPSRHSAADIGDEPLMMARRVPVVVARDRTDGAALACALGATVILMDDGFQNPALTKDASLIVVDSHRSIGNGSVFPAGPLRAPLPLQVARTDALVVVGDGTAADGLAQQITTKGGVVLRARLVPEPASVEALRGRRVLAFAGIGDPARFVATLRDSGVEVVEQRAFADHHPFTAEELAELAAAAKRDGLTLVTTEKDLARIGGAQQALGVEIVPFAVTLAFGDEAKLRLFLLDRLNGARAAKLAGRR.

51–58 (HMGGAGKT) serves as a coordination point for ATP.

Belongs to the LpxK family.

The catalysed reaction is a lipid A disaccharide + ATP = a lipid IVA + ADP + H(+). It functions in the pathway glycolipid biosynthesis; lipid IV(A) biosynthesis; lipid IV(A) from (3R)-3-hydroxytetradecanoyl-[acyl-carrier-protein] and UDP-N-acetyl-alpha-D-glucosamine: step 6/6. In terms of biological role, transfers the gamma-phosphate of ATP to the 4'-position of a tetraacyldisaccharide 1-phosphate intermediate (termed DS-1-P) to form tetraacyldisaccharide 1,4'-bis-phosphate (lipid IVA). In Rhodopseudomonas palustris (strain ATCC BAA-98 / CGA009), this protein is Tetraacyldisaccharide 4'-kinase.